A 423-amino-acid polypeptide reads, in one-letter code: Lysosomal acid phosphatase (423 aa).

Residues 1–30 form the signal peptide; it reads MAGRRFGWSRAALLQLILGVNLMVMPRTQA. At 31–380 the chain is on the lumenal side; that stretch reads RTLRFVTLLY…QLAGGPADTE (350 aa). His-42 functions as the Nucleophile in the catalytic mechanism. 6 N-linked (GlcNAc...) asparagine glycosylation sites follow: Asn-92, Asn-133, Asn-167, Asn-177, Asn-191, and Asn-267. Intrachain disulfides connect Cys-159–Cys-370, Cys-212–Cys-310, and Cys-345–Cys-349. The active-site Proton donor is Asp-287. N-linked (GlcNAc...) asparagine glycans are attached at residues Asn-322 and Asn-331. Residues 381 to 401 traverse the membrane as a helical segment; that stretch reads VIVALAVCGSILFLLIVLLLT. Residues 402–423 lie on the Cytoplasmic side of the membrane; that stretch reads VLFRVQAQPPGYRHVPDGEDHA.

Belongs to the histidine acid phosphatase family. The membrane-bound form is converted to the soluble form by sequential proteolytic processing. First, the C-terminal cytoplasmic tail is removed. Cleavage by a lysosomal protease releases the soluble form in the lysosome lumen.

The protein localises to the lysosome membrane. It localises to the lysosome lumen. It carries out the reaction a phosphate monoester + H2O = an alcohol + phosphate. This is Lysosomal acid phosphatase (ACP2) from Bos taurus (Bovine).